The following is a 353-amino-acid chain: Photosystem II protein D1 (353 aa).

Thr-2 bears the N-acetylthreonine mark. Residue Thr-2 is modified to Phosphothreonine. The next 3 membrane-spanning stretches (helical) occupy residues 29–46, 118–133, and 142–156; these read YIGW…TATS, HFFI…EWEL, and WIAV…AATA. His-118 serves as a coordination point for chlorophyll a. Tyr-126 is a pheophytin a binding site. [CaMn4O5] cluster-binding residues include Asp-170 and Glu-189. A helical membrane pass occupies residues 197–218; sequence FHMLGVAGVFGGSLFSAMHGSL. Residue His-198 coordinates chlorophyll a. Residues His-215 and 264–265 each bind a quinone; that span reads SF. His-215 contacts Fe cation. His-272 provides a ligand contact to Fe cation. A helical membrane pass occupies residues 274 to 288; that stretch reads FLAAWPVIGIWFTAL. [CaMn4O5] cluster-binding residues include His-332, Glu-333, Asp-342, and Ala-344. The propeptide occupies 345–353; that stretch reads AFEAPSINA.

The protein belongs to the reaction center PufL/M/PsbA/D family. PSII is composed of 1 copy each of membrane proteins PsbA, PsbB, PsbC, PsbD, PsbE, PsbF, PsbH, PsbI, PsbJ, PsbK, PsbL, PsbM, PsbT, PsbX, PsbY, PsbZ, Psb30/Ycf12, at least 3 peripheral proteins of the oxygen-evolving complex and a large number of cofactors. It forms dimeric complexes. It depends on The D1/D2 heterodimer binds P680, chlorophylls that are the primary electron donor of PSII, and subsequent electron acceptors. It shares a non-heme iron and each subunit binds pheophytin, quinone, additional chlorophylls, carotenoids and lipids. D1 provides most of the ligands for the Mn4-Ca-O5 cluster of the oxygen-evolving complex (OEC). There is also a Cl(-1) ion associated with D1 and D2, which is required for oxygen evolution. The PSII complex binds additional chlorophylls, carotenoids and specific lipids. as a cofactor. Tyr-161 forms a radical intermediate that is referred to as redox-active TyrZ, YZ or Y-Z. Post-translationally, C-terminally processed by CTPA; processing is essential to allow assembly of the oxygen-evolving complex and thus photosynthetic growth.

The protein localises to the plastid. Its subcellular location is the chloroplast thylakoid membrane. The enzyme catalyses 2 a plastoquinone + 4 hnu + 2 H2O = 2 a plastoquinol + O2. Photosystem II (PSII) is a light-driven water:plastoquinone oxidoreductase that uses light energy to abstract electrons from H(2)O, generating O(2) and a proton gradient subsequently used for ATP formation. It consists of a core antenna complex that captures photons, and an electron transfer chain that converts photonic excitation into a charge separation. The D1/D2 (PsbA/PsbD) reaction center heterodimer binds P680, the primary electron donor of PSII as well as several subsequent electron acceptors. This Chlamydomonas moewusii (Chlamydomonas eugametos) protein is Photosystem II protein D1.